The sequence spans 721 residues: Polyribonucleotide nucleotidyltransferase (721 aa).

Mg(2+) contacts are provided by Asp495 and Asp501. A KH domain is found at 562 to 621 (PRLLSFRIDPELIGTVIGPGGRTIKGITERTNTKIDIEDGGIVTIASHDGAAAEEAQKII). The S1 motif domain maps to 631–699 (GEIFPGVVTR…SRGRINLTLR (69 aa)). A disordered region spans residues 702 to 721 (GQNGGMSYPEPTPTPVAPLS). The span at 711–721 (EPTPTPVAPLS) shows a compositional bias: pro residues.

The protein belongs to the polyribonucleotide nucleotidyltransferase family. The cofactor is Mg(2+).

The protein localises to the cytoplasm. It carries out the reaction RNA(n+1) + phosphate = RNA(n) + a ribonucleoside 5'-diphosphate. Functionally, involved in mRNA degradation. Catalyzes the phosphorolysis of single-stranded polyribonucleotides processively in the 3'- to 5'-direction. In Prochlorococcus marinus (strain MIT 9301), this protein is Polyribonucleotide nucleotidyltransferase.